An 804-amino-acid chain; its full sequence is Protein-lysine N-methyltransferase SMYD4 (804 aa).

112-114 (RSA) contacts S-adenosyl-L-methionine. Residues 233–574 (SSVGLCIDPL…KGQEILHCYG (342 aa)) enclose the SET domain. Residues Cys-296, Cys-299, Cys-309, Cys-312, Cys-318, Cys-322, His-331, and Cys-335 each contribute to the Zn(2+) site. Residues 296-335 (CHRCLKHTLATVPCDGCSYAKYCSQECLQQAWELYHRTEC) form an MYND-type zinc finger. Residues Asn-427, 539–540 (NH), Tyr-573, and Phe-595 contribute to the S-adenosyl-L-methionine site.

Belongs to the class V-like SAM-binding methyltransferase superfamily. Interacts (via MYND-type zinc finger) with HDAC1.

It localises to the nucleus. Its subcellular location is the cytoplasm. The catalysed reaction is L-lysyl-[protein] + S-adenosyl-L-methionine = N(6)-methyl-L-lysyl-[protein] + S-adenosyl-L-homocysteine + H(+). Functionally, protein-lysine N-methyltransferase. Monomethylates PRMT5, modulating its transcriptional activity. May also act as a histone methyltransferase. Plays a critical role in cardiac development. Acts as a key epigenetic regulator of gene expression during cardiac development via its dual activities as a methyltransferase and negative regulator of HDAC1. This Pongo abelii (Sumatran orangutan) protein is Protein-lysine N-methyltransferase SMYD4 (SMYD4).